Here is a 329-residue protein sequence, read N- to C-terminus: Ribosomal RNA small subunit methyltransferase H (329 aa).

S-adenosyl-L-methionine contacts are provided by residues 39–41 (GGY), aspartate 56, phenylalanine 85, aspartate 106, and glutamine 113. The tract at residues 289-308 (SGAIRPTPEEEARNPRARSA) is disordered.

This sequence belongs to the methyltransferase superfamily. RsmH family.

Its subcellular location is the cytoplasm. The catalysed reaction is cytidine(1402) in 16S rRNA + S-adenosyl-L-methionine = N(4)-methylcytidine(1402) in 16S rRNA + S-adenosyl-L-homocysteine + H(+). In terms of biological role, specifically methylates the N4 position of cytidine in position 1402 (C1402) of 16S rRNA. The protein is Ribosomal RNA small subunit methyltransferase H of Novosphingobium aromaticivorans (strain ATCC 700278 / DSM 12444 / CCUG 56034 / CIP 105152 / NBRC 16084 / F199).